A 508-amino-acid polypeptide reads, in one-letter code: POTE ankyrin domain family member G (508 aa).

ANK repeat units lie at residues 172–201 (QKRTALHLASANGNSEVVKLLLDRRCQLNI), 205–234 (KKRTALTKAVQCREDECALMLLEHGTDPNI), 238–267 (YGNTALHYAIYNEDKLMAKALLLYGADIES), 271–300 (HGLTPLLLGVHEQKQQVVKFLIKKKANLNA), and 304–333 (YGRTALILAVCCGSASIVSLLLEQNIDVSS). Residues 367 to 376 (KVSSENSNPE) are compositionally biased toward polar residues. Residues 367–488 (KVSSENSNPE…QLSEEQNTGI (122 aa)) are disordered. Basic and acidic residues-rich tracts occupy residues 377-392 (QDLKLTSEEESQRLKG) and 406-421 (EINKGGDRKVEEEMKK). Residues 476-488 (TQKQLSEEQNTGI) show a composition bias toward polar residues.

It belongs to the POTE family.

This is POTE ankyrin domain family member G (POTEG) from Homo sapiens (Human).